The chain runs to 127 residues: UPF0325 protein VV1_1856 (127 aa).

It belongs to the UPF0325 family.

The chain is UPF0325 protein VV1_1856 from Vibrio vulnificus (strain CMCP6).